Here is a 419-residue protein sequence, read N- to C-terminus: Oxamate carbamoyltransferase subunit AllG (419 aa).

The protein belongs to the AllG family. In terms of assembly, the OXTCase is composed of 3 subunits, AllF, AllG and AllH. The cofactor is Mg(2+).

It carries out the reaction oxamate + carbamoyl phosphate = N-carbamoyl-2-oxoglycine + phosphate. It participates in nitrogen metabolism; (S)-allantoin degradation. Functionally, component of a carbamoyltransferase involved in the anaerobic nitrogen utilization via the assimilation of allantoin. Catalyzes the conversion of oxalurate (N-carbamoyl-2-oxoglycine) to oxamate and carbamoyl phosphate. The polypeptide is Oxamate carbamoyltransferase subunit AllG (Escherichia coli (strain K12)).